The sequence spans 115 residues: Hydrogenase maturation factor HypA (115 aa).

H2 is a Ni(2+) binding site. Zn(2+) contacts are provided by C73, C76, C89, and C92.

This sequence belongs to the HypA/HybF family.

Functionally, involved in the maturation of [NiFe] hydrogenases. Required for nickel insertion into the metal center of the hydrogenase. The polypeptide is Hydrogenase maturation factor HypA (Parabacteroides distasonis (strain ATCC 8503 / DSM 20701 / CIP 104284 / JCM 5825 / NCTC 11152)).